A 285-amino-acid polypeptide reads, in one-letter code: CCR4-NOT transcription complex subunit 7 (285 aa).

5 residues coordinate a divalent metal cation: Asp-40, Glu-42, Asp-161, Asp-230, and Glu-278.

Belongs to the CAF1 family. In terms of assembly, component of the CCR4-NOT complex. Mn(2+) serves as cofactor. The cofactor is Mg(2+). Requires Co(2+) as cofactor.

It is found in the nucleus. The protein resides in the cytoplasm. The enzyme catalyses Exonucleolytic cleavage of poly(A) to 5'-AMP.. In terms of biological role, has 3'-5' poly(A) exoribonuclease activity for synthetic poly(A) RNA substrate. Catalytic component of the CCR4-NOT complex which is one of the major cellular mRNA deadenylases and is linked to various cellular processes including bulk mRNA degradation, miRNA-mediated repression, translational repression during translational initiation and general transcription regulation. During miRNA-mediated repression the complex also seems to act as translational repressor during translational initiation. Additional complex functions may be a consequence of its influence on mRNA expression. This is CCR4-NOT transcription complex subunit 7 (cnot7) from Xenopus tropicalis (Western clawed frog).